Here is a 692-residue protein sequence, read N- to C-terminus: MGTVSSRRSWWPLPLPLLLLLLLGLAGARAQEDEDGDYEELVLALRSEEDGLADAPEHGATATFHRCAKDPWRLPGTYVVVLKEETHRSQSERTARRLQAQAARRGYLTKILHVFHHLLPGFLVKMSGDLLELALKLPHVDYIEEDSSVFAQSIPWNLERITPARYRADEYQPPKGGSLVEVYLLDTSIQSDHREIEGRVMVTDFESVPEEDGTRFHRQASKCDSHGTHLAGVVSGRDAGVAKGAGLRSLRVLNCQGKGTVSGTLIGLEFIRKSQLVQPVGPLVVLLPLAGGYSRVFNAACQRLARAGVVLVTAAGNFRDDACLYSPASAPEVITVGATNAQDQPVTLGTLGTNFGRCVDLFAPGEDIIGASSDCSTCFVSRSGTSQAAAHVAGIAAMMLSAEPELTLAELRQRLIHFSAKDVINEAWFPEDQRVLTPNLVAALPPSTHRAGWQLFCRTVWSAHSGPTRMATAVVRCAPDEELLSCSSFSRSGKRRGERIEAQGGKRVCRAHNAFGGEGVYAIARCCLLPQVNCSVHTAPPAGASMGTRVHCHQQGHVLTGCSSHWEVEDLGTHKPPVLRPRGQPNQCVGHREASIHASCCHAPGLECKVKEHGIPAPQEQVIVACEDGWTLTGCNALPGTSHVLGAYAVDNTCVVRSRDVSTTGSTSEEAMAAVAICCRSRHLVQASQELQ.

The signal sequence occupies residues 1-30; that stretch reads MGTVSSRRSWWPLPLPLLLLLLLGLAGARA. Residues 31–152 constitute a propeptide that is removed on maturation; it reads QEDEDGDYEE…IEEDSSVFAQ (122 aa). Tyr38 is modified (sulfotyrosine). Ser47 carries the post-translational modification Phosphoserine. The Inhibitor I9 domain occupies 77–149; sequence TYVVVLKEET…VDYIEEDSSV (73 aa). Residues 155-444 enclose the Peptidase S8 domain; it reads PWNLERITPA…VLTPNLVAAL (290 aa). Active-site charge relay system residues include Asp186 and His226. Cystine bridges form between Cys223–Cys255 and Cys323–Cys358. Ser386 acts as the Charge relay system in catalysis. Residues 450–692 are C-terminal domain; the sequence is RAGWQLFCRT…HLVQASQELQ (243 aa). 3 disulfide bridges follow: Cys457/Cys527, Cys477/Cys526, and Cys486/Cys509. Asn533 carries an N-linked (GlcNAc...) asparagine glycan. Disulfide bonds link Cys534/Cys601, Cys552/Cys600, Cys562/Cys588, Cys608/Cys679, Cys626/Cys678, and Cys635/Cys654. Residue Ser688 is modified to Phosphoserine.

It belongs to the peptidase S8 family. As to quaternary structure, monomer. Can self-associate to form dimers and higher multimers which may have increased LDLR degrading activity. The precursor protein but not the mature protein may form multimers. Interacts with APOB, VLDLR, LRP8/APOER2 and BACE1. The full-length immature form (pro-PCSK9) interacts with SCNN1A, SCNN1B and SCNN1G. The pro-PCSK9 form (via C-terminal domain) interacts with LDLR. Interacts (via the C-terminal domain) with ANXA2 (via repeat Annexin 1); the interaction inhibits the degradation of LDLR. Requires Ca(2+) as cofactor. In terms of processing, cleavage by furin and PCSK5 generates a truncated inactive protein that is unable to induce LDLR degradation. Undergoes autocatalytic cleavage in the endoplasmic reticulum to release the propeptide from the N-terminus and the cleavage of the propeptide is strictly required for its maturation and activation. The cleaved propeptide however remains associated with the catalytic domain through non-covalent interactions, preventing potential substrates from accessing its active site. As a result, it is secreted from cells as a propeptide-containing, enzymatically inactive protein. Post-translationally, phosphorylation protects the propeptide against proteolysis.

It is found in the cytoplasm. It localises to the secreted. The protein localises to the endosome. The protein resides in the lysosome. Its subcellular location is the cell surface. It is found in the endoplasmic reticulum. It localises to the golgi apparatus. Its activity is regulated as follows. Its proteolytic activity is autoinhibited by the non-covalent binding of the propeptide to the catalytic domain. Inhibited by EGTA. Functionally, crucial player in the regulation of plasma cholesterol homeostasis. Binds to low-density lipid receptor family members: low density lipoprotein receptor (LDLR), very low density lipoprotein receptor (VLDLR), apolipoprotein E receptor (LRP1/APOER) and apolipoprotein receptor 2 (LRP8/APOER2), and promotes their degradation in intracellular acidic compartments. Acts via a non-proteolytic mechanism to enhance the degradation of the hepatic LDLR through a clathrin LDLRAP1/ARH-mediated pathway. May prevent the recycling of LDLR from endosomes to the cell surface or direct it to lysosomes for degradation. Can induce ubiquitination of LDLR leading to its subsequent degradation. Inhibits intracellular degradation of APOB via the autophagosome/lysosome pathway in a LDLR-independent manner. Involved in the disposal of non-acetylated intermediates of BACE1 in the early secretory pathway. Inhibits epithelial Na(+) channel (ENaC)-mediated Na(+) absorption by reducing ENaC surface expression primarily by increasing its proteasomal degradation. Regulates neuronal apoptosis via modulation of LRP8/APOER2 levels and related anti-apoptotic signaling pathways. In Colobus guereza (Mantled guereza), this protein is Proprotein convertase subtilisin/kexin type 9 (PCSK9).